The sequence spans 407 residues: Imidazolonepropionase (407 aa).

His-75 and His-77 together coordinate Fe(3+). Positions 75 and 77 each coordinate Zn(2+). 3 residues coordinate 4-imidazolone-5-propanoate: Arg-84, Tyr-147, and His-180. Tyr-147 serves as a coordination point for N-formimidoyl-L-glutamate. His-245 lines the Fe(3+) pocket. Residue His-245 coordinates Zn(2+). Gln-248 serves as a coordination point for 4-imidazolone-5-propanoate. A Fe(3+)-binding site is contributed by Asp-320. A Zn(2+)-binding site is contributed by Asp-320. N-formimidoyl-L-glutamate is bound by residues Asn-322 and Gly-324. 4-imidazolone-5-propanoate is bound at residue Ser-325.

This sequence belongs to the metallo-dependent hydrolases superfamily. HutI family. Zn(2+) serves as cofactor. Requires Fe(3+) as cofactor.

The protein resides in the cytoplasm. It catalyses the reaction 4-imidazolone-5-propanoate + H2O = N-formimidoyl-L-glutamate. It participates in amino-acid degradation; L-histidine degradation into L-glutamate; N-formimidoyl-L-glutamate from L-histidine: step 3/3. Functionally, catalyzes the hydrolytic cleavage of the carbon-nitrogen bond in imidazolone-5-propanoate to yield N-formimidoyl-L-glutamate. It is the third step in the universal histidine degradation pathway. The chain is Imidazolonepropionase from Pseudoalteromonas atlantica (strain T6c / ATCC BAA-1087).